Consider the following 212-residue polypeptide: Protein-L-isoaspartate O-methyltransferase (212 aa).

The active site involves serine 60.

Belongs to the methyltransferase superfamily. L-isoaspartyl/D-aspartyl protein methyltransferase family.

The protein localises to the cytoplasm. It catalyses the reaction [protein]-L-isoaspartate + S-adenosyl-L-methionine = [protein]-L-isoaspartate alpha-methyl ester + S-adenosyl-L-homocysteine. In terms of biological role, catalyzes the methyl esterification of L-isoaspartyl residues in peptides and proteins that result from spontaneous decomposition of normal L-aspartyl and L-asparaginyl residues. It plays a role in the repair and/or degradation of damaged proteins. The protein is Protein-L-isoaspartate O-methyltransferase of Methanococcus maripaludis (strain C5 / ATCC BAA-1333).